The chain runs to 100 residues: MNQRQLMQMAQQMQRQMQKVQEELAATIVEGTAGGGAITVKMNGHREVQSITISPEVVDPDDVEMLQDLLLVAINDASRKAQQLAEERMQPLTGGLKGLF.

This sequence belongs to the YbaB/EbfC family. Homodimer.

The protein localises to the cytoplasm. The protein resides in the nucleoid. Binds to DNA and alters its conformation. May be involved in regulation of gene expression, nucleoid organization and DNA protection. The protein is Nucleoid-associated protein Caur_0522 of Chloroflexus aurantiacus (strain ATCC 29366 / DSM 635 / J-10-fl).